The primary structure comprises 353 residues: Probable protein phosphatase 2C 48 (353 aa).

One can recognise a PPM-type phosphatase domain in the interval 54-348 (FAAVCSRRGE…DDCSAICLFF (295 aa)). Positions 90, 91, 293, and 339 each coordinate Mn(2+).

The protein belongs to the PP2C family. Mg(2+) is required as a cofactor. Mn(2+) serves as cofactor.

The catalysed reaction is O-phospho-L-seryl-[protein] + H2O = L-seryl-[protein] + phosphate. It carries out the reaction O-phospho-L-threonyl-[protein] + H2O = L-threonyl-[protein] + phosphate. In Oryza sativa subsp. japonica (Rice), this protein is Probable protein phosphatase 2C 48.